A 23-amino-acid chain; its full sequence is AWVDWEDQILQDTVPLVNFVRMI.

Its subcellular location is the plastid. The protein resides in the chloroplast. Its function is as follows. Has a function in the early stage of chloroplast development and palisade cell morphogenesis. The protein is Protein DCL, chloroplastic of Pseudotsuga menziesii (Douglas-fir).